Consider the following 253-residue polypeptide: uncharacterized protein (253 aa).

The N-terminal stretch at 1–19 is a signal peptide; the sequence is MHYLKKVTIYISLLILVSG. Cysteine 20 is lipidated: N-palmitoyl cysteine. A lipid anchor (S-diacylglycerol cysteine) is attached at cysteine 20.

Belongs to the staphylococcal tandem lipoprotein family.

It localises to the cell membrane. This is an uncharacterized protein from Staphylococcus epidermidis (strain ATCC 35984 / DSM 28319 / BCRC 17069 / CCUG 31568 / BM 3577 / RP62A).